Reading from the N-terminus, the 806-residue chain is Phenylalanine--tRNA ligase beta subunit (806 aa).

Residues 40–155 (NKGVKGVVVG…SDAEVGADAL (116 aa)) enclose the tRNA-binding domain. The region spanning 409 to 484 (VQERTVSVTA…RLYGYDHIPV (76 aa)) is the B5 domain. 4 residues coordinate Mg(2+): D462, D468, E471, and E472. In terms of domain architecture, FDX-ACB spans 712-805 (PRFPSMTRDM…VEEKFGAELR (94 aa)).

The protein belongs to the phenylalanyl-tRNA synthetase beta subunit family. Type 1 subfamily. As to quaternary structure, tetramer of two alpha and two beta subunits. The cofactor is Mg(2+).

Its subcellular location is the cytoplasm. It carries out the reaction tRNA(Phe) + L-phenylalanine + ATP = L-phenylalanyl-tRNA(Phe) + AMP + diphosphate + H(+). In Bacillus cereus (strain ZK / E33L), this protein is Phenylalanine--tRNA ligase beta subunit.